A 255-amino-acid polypeptide reads, in one-letter code: 3-dehydroquinate dehydratase (255 aa).

3-dehydroquinate is bound by residues E46 to R48 and R82. H143 (proton donor/acceptor) is an active-site residue. K170 acts as the Schiff-base intermediate with substrate in catalysis. Residues R213, S232, and Q236 each coordinate 3-dehydroquinate.

The protein belongs to the type-I 3-dehydroquinase family. In terms of assembly, homodimer.

It catalyses the reaction 3-dehydroquinate = 3-dehydroshikimate + H2O. It functions in the pathway metabolic intermediate biosynthesis; chorismate biosynthesis; chorismate from D-erythrose 4-phosphate and phosphoenolpyruvate: step 3/7. Functionally, involved in the third step of the chorismate pathway, which leads to the biosynthesis of aromatic amino acids. Catalyzes the cis-dehydration of 3-dehydroquinate (DHQ) and introduces the first double bond of the aromatic ring to yield 3-dehydroshikimate. The protein is 3-dehydroquinate dehydratase of Bacillus subtilis (strain 168).